The following is a 105-amino-acid chain: Large ribosomal subunit protein uL24 (105 aa).

This sequence belongs to the universal ribosomal protein uL24 family. Part of the 50S ribosomal subunit.

Functionally, one of two assembly initiator proteins, it binds directly to the 5'-end of the 23S rRNA, where it nucleates assembly of the 50S subunit. In terms of biological role, one of the proteins that surrounds the polypeptide exit tunnel on the outside of the subunit. The polypeptide is Large ribosomal subunit protein uL24 (Clostridium botulinum (strain Langeland / NCTC 10281 / Type F)).